The primary structure comprises 284 residues: Phosphatidylserine decarboxylase proenzyme (284 aa).

Residues aspartate 88, histidine 145, and serine 251 each act as charge relay system; for autoendoproteolytic cleavage activity in the active site. Serine 251 (schiff-base intermediate with substrate; via pyruvic acid; for decarboxylase activity) is an active-site residue. Serine 251 bears the Pyruvic acid (Ser); by autocatalysis mark.

This sequence belongs to the phosphatidylserine decarboxylase family. PSD-B subfamily. Prokaryotic type I sub-subfamily. In terms of assembly, heterodimer of a large membrane-associated beta subunit and a small pyruvoyl-containing alpha subunit. Pyruvate serves as cofactor. Is synthesized initially as an inactive proenzyme. Formation of the active enzyme involves a self-maturation process in which the active site pyruvoyl group is generated from an internal serine residue via an autocatalytic post-translational modification. Two non-identical subunits are generated from the proenzyme in this reaction, and the pyruvate is formed at the N-terminus of the alpha chain, which is derived from the carboxyl end of the proenzyme. The autoendoproteolytic cleavage occurs by a canonical serine protease mechanism, in which the side chain hydroxyl group of the serine supplies its oxygen atom to form the C-terminus of the beta chain, while the remainder of the serine residue undergoes an oxidative deamination to produce ammonia and the pyruvoyl prosthetic group on the alpha chain. During this reaction, the Ser that is part of the protease active site of the proenzyme becomes the pyruvoyl prosthetic group, which constitutes an essential element of the active site of the mature decarboxylase.

It localises to the cell membrane. It catalyses the reaction a 1,2-diacyl-sn-glycero-3-phospho-L-serine + H(+) = a 1,2-diacyl-sn-glycero-3-phosphoethanolamine + CO2. It participates in phospholipid metabolism; phosphatidylethanolamine biosynthesis; phosphatidylethanolamine from CDP-diacylglycerol: step 2/2. In terms of biological role, catalyzes the formation of phosphatidylethanolamine (PtdEtn) from phosphatidylserine (PtdSer). This Polaromonas sp. (strain JS666 / ATCC BAA-500) protein is Phosphatidylserine decarboxylase proenzyme.